Here is a 158-residue protein sequence, read N- to C-terminus: C-type lectin BML-2 (158 aa).

The N-terminal stretch at 1 to 23 is a signal peptide; it reads MGHFTFTGLCLLAMFLSLRGAEC. 4 cysteine pairs are disulfide-bonded: cysteine 26–cysteine 37, cysteine 54–cysteine 154, cysteine 61–cysteine 156, and cysteine 129–cysteine 146. One can recognise a C-type lectin domain in the interval 33–155; sequence KNGLCYKVFS…CESLHPFLCQ (123 aa). The Mannose-binding motif lies at 119-121; the sequence is EPN. The N-linked (GlcNAc...) asparagine glycan is linked to asparagine 121. 3 residues coordinate Ca(2+): glutamate 127, asparagine 142, and aspartate 143.

The protein belongs to the true venom lectin family. Dimer. Probably non-covalently linked. Expressed by the venom gland.

It is found in the secreted. Its function is as follows. Recombinant C-type lectin BML-2 is able to agglutinate erythrocytes. May be a calcium-dependent lectin. This Bungarus multicinctus (Many-banded krait) protein is C-type lectin BML-2.